The following is a 192-amino-acid chain: Signal peptidase complex catalytic subunit sec11 (192 aa).

Over 1-18 (MLSFLSSNLSSTRQSMAQ) the chain is Cytoplasmic. Residues 19–39 (VLNFALVLSTAFMLWKGLSVF) traverse the membrane as a helical; Signal-anchor for type II membrane protein segment. Residues 40-192 (TASSSPIVVV…GLMVILQREQ (153 aa)) lie on the Lumenal side of the membrane. Residues Ser-53, His-92, and Asp-133 each act as charge relay system in the active site. The tract at residues 177–188 (VLLGIMGLMVIL) is C-terminal short (CTS) helix.

The protein belongs to the peptidase S26B family. In terms of assembly, component of the signal peptidase complex (SPC) composed of a catalytic subunit SEC11 and three accessory subunits SPC1, SPC2 and SPC3. The complex induces a local thinning of the ER membrane which is used to measure the length of the signal peptide (SP) h-region of protein substrates. This ensures the selectivity of the complex towards h-regions shorter than 18-20 amino acids. SPC associates with the translocon complex.

It is found in the endoplasmic reticulum membrane. It catalyses the reaction Cleavage of hydrophobic, N-terminal signal or leader sequences from secreted and periplasmic proteins.. Catalytic component of the signal peptidase complex (SPC) which catalyzes the cleavage of N-terminal signal sequences from nascent proteins as they are translocated into the lumen of the endoplasmic reticulum. Specifically cleaves N-terminal signal peptides that contain a hydrophobic alpha-helix (h-region) shorter than 18-20 amino acids. This Aspergillus fumigatus (strain CBS 144.89 / FGSC A1163 / CEA10) (Neosartorya fumigata) protein is Signal peptidase complex catalytic subunit sec11 (sec11).